The following is a 207-amino-acid chain: Abscisic acid receptor PYL9 (207 aa).

Positions Phe-31–Glu-197 are START-like. Abscisate contacts are provided by residues Lys-74, Ala-104–Glu-109, Arg-131–Ser-137, and Glu-162. The short motif at Ser-100 to Ala-104 is the Gate loop element. The short motif at His-130–Leu-132 is the Latch loop element.

It belongs to the PYR/PYL/RCAR abscisic acid intracellular receptor family. Homodimer. Interacts with PP2C06. Interacts with PP2C50. Binding to PP2C50 is dependent on the presence of abscisic acid (ABA). Interacts with PP2C30 and PP2C53. Binding to PP2C30 and PP2C53 is dependent on the presence of ABA.

Its subcellular location is the cytoplasm. It localises to the cytosol. The protein resides in the nucleus. Its function is as follows. Involved in abscisic acid (ABA) signaling during seed germination and abiotic stress response. Acts as a positive regulator of ABA-mediated inhibition of seed germination, and tolerance to drought and cold stresses. Inhibits the activity of the protein phosphatases PP2C06 and PP2C09 when activated by abscisic acid (ABA). In Oryza sativa subsp. japonica (Rice), this protein is Abscisic acid receptor PYL9.